We begin with the raw amino-acid sequence, 223 residues long: Probable transaldolase (223 aa).

Lys-86 serves as the catalytic Schiff-base intermediate with substrate.

This sequence belongs to the transaldolase family. Type 3B subfamily.

Its subcellular location is the cytoplasm. It catalyses the reaction D-sedoheptulose 7-phosphate + D-glyceraldehyde 3-phosphate = D-erythrose 4-phosphate + beta-D-fructose 6-phosphate. Its pathway is carbohydrate degradation; pentose phosphate pathway; D-glyceraldehyde 3-phosphate and beta-D-fructose 6-phosphate from D-ribose 5-phosphate and D-xylulose 5-phosphate (non-oxidative stage): step 2/3. Its function is as follows. Transaldolase is important for the balance of metabolites in the pentose-phosphate pathway. This Thermoplasma volcanium (strain ATCC 51530 / DSM 4299 / JCM 9571 / NBRC 15438 / GSS1) protein is Probable transaldolase (tal).